The primary structure comprises 153 residues: Deoxyuridine 5'-triphosphate nucleotidohydrolase (153 aa).

Substrate is bound by residues 65–67, Asn78, and 82–84; these read RSG and TID. Residues 132-153 form a disordered region; sequence MTQRGEGGFGHTGISAVHPRTH.

It belongs to the dUTPase family. Requires Mg(2+) as cofactor.

The enzyme catalyses dUTP + H2O = dUMP + diphosphate + H(+). It participates in pyrimidine metabolism; dUMP biosynthesis; dUMP from dCTP (dUTP route): step 2/2. Functionally, this enzyme is involved in nucleotide metabolism: it produces dUMP, the immediate precursor of thymidine nucleotides and it decreases the intracellular concentration of dUTP so that uracil cannot be incorporated into DNA. This is Deoxyuridine 5'-triphosphate nucleotidohydrolase from Chlorobium limicola (strain DSM 245 / NBRC 103803 / 6330).